The sequence spans 339 residues: Protein-glutamate methylesterase/protein-glutamine glutaminase 2 (339 aa).

Residues 2 to 119 enclose the Response regulatory domain; sequence NIGIVNDLPL…GLSTDASPQA (118 aa). D53 bears the 4-aspartylphosphate mark. A CheB-type methylesterase domain is found at 141–336; it reads PGPAPERGQP…PQLISRITRP (196 aa). Active-site residues include S158, H185, and D278.

It belongs to the CheB family. In terms of processing, phosphorylated by CheA. Phosphorylation of the N-terminal regulatory domain activates the methylesterase activity.

It is found in the cytoplasm. The enzyme catalyses [protein]-L-glutamate 5-O-methyl ester + H2O = L-glutamyl-[protein] + methanol + H(+). It carries out the reaction L-glutaminyl-[protein] + H2O = L-glutamyl-[protein] + NH4(+). Its function is as follows. Involved in chemotaxis. Part of a chemotaxis signal transduction system that modulates chemotaxis in response to various stimuli. Catalyzes the demethylation of specific methylglutamate residues introduced into the chemoreceptors (methyl-accepting chemotaxis proteins or MCP) by CheR. Also mediates the irreversible deamidation of specific glutamine residues to glutamic acid. The protein is Protein-glutamate methylesterase/protein-glutamine glutaminase 2 of Burkholderia lata (strain ATCC 17760 / DSM 23089 / LMG 22485 / NCIMB 9086 / R18194 / 383).